A 485-amino-acid chain; its full sequence is Aspartyl/glutamyl-tRNA(Asn/Gln) amidotransferase subunit B (485 aa).

Belongs to the GatB/GatE family. GatB subfamily. As to quaternary structure, heterotrimer of A, B and C subunits.

The enzyme catalyses L-glutamyl-tRNA(Gln) + L-glutamine + ATP + H2O = L-glutaminyl-tRNA(Gln) + L-glutamate + ADP + phosphate + H(+). It catalyses the reaction L-aspartyl-tRNA(Asn) + L-glutamine + ATP + H2O = L-asparaginyl-tRNA(Asn) + L-glutamate + ADP + phosphate + 2 H(+). In terms of biological role, allows the formation of correctly charged Asn-tRNA(Asn) or Gln-tRNA(Gln) through the transamidation of misacylated Asp-tRNA(Asn) or Glu-tRNA(Gln) in organisms which lack either or both of asparaginyl-tRNA or glutaminyl-tRNA synthetases. The reaction takes place in the presence of glutamine and ATP through an activated phospho-Asp-tRNA(Asn) or phospho-Glu-tRNA(Gln). The sequence is that of Aspartyl/glutamyl-tRNA(Asn/Gln) amidotransferase subunit B from Borrelia turicatae (strain 91E135).